Here is a 270-residue protein sequence, read N- to C-terminus: MDLFQATILGIVQGLTEVLPISSSAHLILIPTFLKWPESGITFDVALHLGTFIALCLYFWRDLIELASDFFTGMADWKHQPTSRRLPFYIIAGTFPAAIVGKLFETTIEELFRKSPSLIALFLIVFALLLAFADTSGSKKWKIEAITLKSAIIIGLAQCLALIPGVSRSGITITAALLLGFNREAAARFSFLLSLPIVAGAALFELSGLLKTGIPPSDVAPLLIGIATSAVFGYISVAFLLKMVQRSSLYPFVWYRIAIGCLALVFINFG.

8 helical membrane-spanning segments follow: residues 14 to 34 (GLTEVLPISSSAHLILIPTFL), 40 to 60 (GITFDVALHLGTFIALCLYFW), 88 to 108 (FYIIAGTFPAAIVGKLFETTI), 117 to 137 (SLIALFLIVFALLLAFADTSG), 146 to 166 (ITLKSAIIIGLAQCLALIPGV), 189 to 209 (FSFLLSLPIVAGAALFELSGL), 221 to 241 (PLLIGIATSAVFGYISVAFLL), and 249 to 269 (LYPFVWYRIAIGCLALVFINF).

It belongs to the UppP family.

It localises to the cell inner membrane. It carries out the reaction di-trans,octa-cis-undecaprenyl diphosphate + H2O = di-trans,octa-cis-undecaprenyl phosphate + phosphate + H(+). Functionally, catalyzes the dephosphorylation of undecaprenyl diphosphate (UPP). Confers resistance to bacitracin. This is Undecaprenyl-diphosphatase from Geotalea daltonii (strain DSM 22248 / JCM 15807 / FRC-32) (Geobacter daltonii).